An 830-amino-acid chain; its full sequence is MTQVAEIKSPHEQRLEDNIAGKEDIYRESHKRVFKLLERFDGQKPAIDVERALYFTQSMAETVGQPLVLRWAKALMNVAKNITVMVQDDQLLLGRCGGHDGRYGILYPELDGDFLDIAVRDLPTRPQSPASISPEDAKIVVEQIAPFWKGRTYHEALNKALPAEVHKLTYDDPDGLISRFIVNETSSFRSSIQWVHDYEVVLKRGFNGLKQEMEEKLAALDPASPVDQVDKRPFIEATILVCDAIVLWAKRHADAARKAAEACADPVRKAELIRMAENAEHVPANPARDFYEAVQSQYFTQMFSRLEQKTGTTISNGRMDQYFYPFYKKDMEAGILTDEKTLEYLECMWVGMAEFIDMYISPAGGAFNEGYAHWEAVTIGGQTPDGRDATNDLTYLFLKSKREFPLHYPDLAARIHSRAPERYLWDVAETIKFGSGFPKLCNDEECIPLYVSKGATFEEALDYAVSGCIEIRMPNRDTYTSGGAYTNFASAVEMALYDGKMKKYGDVQLGIQTGDARKFKSWDEFWNAYVQQHMLLLRTTFIQQYIVIQTRAKHFAQPMGSVLHALCRKHCIDLHQPQIPEGLNFGYFEFMGLGTVIDSLAAIKKLVFEDKKLTMDQLIDALEANFEGYEDIQQLLRTAPCYGNDDEYADEIGRELDRMAVSFAAKYGKEMGINNDARYVPFTSHVPFGKVVSATPNGRVAWFPLADGSSPSHGADHNGPTAILLSNHNTKNYGMRARAARLINVKFTPKCVEGDAGTEKLVQFIRTWCDLKLWHIQFNVINADTLKKAQKDPQKYRNLIVRIAGYSAYFVDLTPDLQNDLIARTGHDQM.

The PFL domain maps to 31–700 (KRVFKLLERF…VVSATPNGRV (670 aa)). 2-hydroxyethane-1-sulfonate is bound by residues Arg189, Gln193, 468–470 (CIE), and Arg678. Catalysis depends on Cys468, which acts as the Cysteine radical intermediate. Residue Glu470 is the Proton acceptor of the active site. The Glycine radical domain occupies 707–830 (DGSSPSHGAD…LIARTGHDQM (124 aa)). Gly805 carries the glycine radical modification.

It belongs to the glycyl radical enzyme (GRE) family. Homodimer. Post-translationally, requires the activating protein IslB to generate the key active site glycyl radical on Gly-805 that is involved in catalysis.

It catalyses the reaction 2-hydroxyethane-1-sulfonate = acetaldehyde + sulfite + H(+). It functions in the pathway organosulfur degradation; alkanesulfonate degradation. Functionally, involved in an anaerobic respiration pathway that converts the sulfonate taurine (2-aminoethanesulfonate) to ammonia, acetate and sulfide. Catalyzes the radical-mediated C-S bond cleavage of isethionate (2-hydroxyethanesulfonate) to form sulfite and acetaldehyde. Is not able to use any alternate organosulfonate or (S)-1,2-propanediol or choline as a substrate, showing that this enzyme is highly specific for isethionate. In Bilophila wadsworthia (strain 3_1_6), this protein is Isethionate sulfite-lyase.